A 121-amino-acid chain; its full sequence is Large ribosomal subunit protein uL18 (121 aa).

It belongs to the universal ribosomal protein uL18 family. In terms of assembly, part of the 50S ribosomal subunit; part of the 5S rRNA/L5/L18/L25 subcomplex. Contacts the 5S and 23S rRNAs.

Its function is as follows. This is one of the proteins that bind and probably mediate the attachment of the 5S RNA into the large ribosomal subunit, where it forms part of the central protuberance. The sequence is that of Large ribosomal subunit protein uL18 from Spiroplasma kunkelii.